Here is a 357-residue protein sequence, read N- to C-terminus: S-adenosylmethionine:tRNA ribosyltransferase-isomerase (357 aa).

The protein belongs to the QueA family. Monomer.

The protein localises to the cytoplasm. The catalysed reaction is 7-aminomethyl-7-carbaguanosine(34) in tRNA + S-adenosyl-L-methionine = epoxyqueuosine(34) in tRNA + adenine + L-methionine + 2 H(+). The protein operates within tRNA modification; tRNA-queuosine biosynthesis. In terms of biological role, transfers and isomerizes the ribose moiety from AdoMet to the 7-aminomethyl group of 7-deazaguanine (preQ1-tRNA) to give epoxyqueuosine (oQ-tRNA). The chain is S-adenosylmethionine:tRNA ribosyltransferase-isomerase from Hamiltonella defensa subsp. Acyrthosiphon pisum (strain 5AT).